The chain runs to 118 residues: Small ribosomal subunit protein uS13 (118 aa).

The tract at residues 94–118 (SLPLRGQRTKTNARTRKGPRKPIKK) is disordered.

Belongs to the universal ribosomal protein uS13 family. As to quaternary structure, part of the 30S ribosomal subunit. Forms a loose heterodimer with protein S19. Forms two bridges to the 50S subunit in the 70S ribosome.

Located at the top of the head of the 30S subunit, it contacts several helices of the 16S rRNA. In the 70S ribosome it contacts the 23S rRNA (bridge B1a) and protein L5 of the 50S subunit (bridge B1b), connecting the 2 subunits; these bridges are implicated in subunit movement. Contacts the tRNAs in the A and P-sites. The polypeptide is Small ribosomal subunit protein uS13 (Shewanella oneidensis (strain ATCC 700550 / JCM 31522 / CIP 106686 / LMG 19005 / NCIMB 14063 / MR-1)).